We begin with the raw amino-acid sequence, 513 residues long: ATP synthase subunit alpha (513 aa).

Position 169–176 (169–176 (GDRQTGKT)) interacts with ATP.

The protein belongs to the ATPase alpha/beta chains family. F-type ATPases have 2 components, CF(1) - the catalytic core - and CF(0) - the membrane proton channel. CF(1) has five subunits: alpha(3), beta(3), gamma(1), delta(1), epsilon(1). CF(0) has three main subunits: a(1), b(2) and c(9-12). The alpha and beta chains form an alternating ring which encloses part of the gamma chain. CF(1) is attached to CF(0) by a central stalk formed by the gamma and epsilon chains, while a peripheral stalk is formed by the delta and b chains.

The protein localises to the cell inner membrane. The catalysed reaction is ATP + H2O + 4 H(+)(in) = ADP + phosphate + 5 H(+)(out). Produces ATP from ADP in the presence of a proton gradient across the membrane. The alpha chain is a regulatory subunit. The chain is ATP synthase subunit alpha from Vibrio vulnificus (strain CMCP6).